The primary structure comprises 317 residues: Ribose-phosphate pyrophosphokinase (317 aa).

Residues 43-45 and 102-103 contribute to the ATP site; these read DGE and RQ. H136 and D175 together coordinate Mg(2+). Residue K198 is part of the active site. D-ribose 5-phosphate is bound by residues R200, D224, and 228-232; that span reads DTAGT.

It belongs to the ribose-phosphate pyrophosphokinase family. Class I subfamily. In terms of assembly, homohexamer. Requires Mg(2+) as cofactor.

It is found in the cytoplasm. It carries out the reaction D-ribose 5-phosphate + ATP = 5-phospho-alpha-D-ribose 1-diphosphate + AMP + H(+). It functions in the pathway metabolic intermediate biosynthesis; 5-phospho-alpha-D-ribose 1-diphosphate biosynthesis; 5-phospho-alpha-D-ribose 1-diphosphate from D-ribose 5-phosphate (route I): step 1/1. Functionally, involved in the biosynthesis of the central metabolite phospho-alpha-D-ribosyl-1-pyrophosphate (PRPP) via the transfer of pyrophosphoryl group from ATP to 1-hydroxyl of ribose-5-phosphate (Rib-5-P). In Oceanobacillus iheyensis (strain DSM 14371 / CIP 107618 / JCM 11309 / KCTC 3954 / HTE831), this protein is Ribose-phosphate pyrophosphokinase.